The following is a 477-amino-acid chain: Probable malate:quinone oxidoreductase (477 aa).

Belongs to the MQO family. It depends on FAD as a cofactor.

The enzyme catalyses (S)-malate + a quinone = a quinol + oxaloacetate. It participates in carbohydrate metabolism; tricarboxylic acid cycle; oxaloacetate from (S)-malate (quinone route): step 1/1. This chain is Probable malate:quinone oxidoreductase, found in Synechococcus sp. (strain RCC307).